Reading from the N-terminus, the 321-residue chain is uncharacterized protein (321 aa).

Positions 1–18 (MKKMKKLLLLLSASFAFS) are cleaved as a signal peptide.

This is an uncharacterized protein from Aquifex aeolicus (strain VF5).